The primary structure comprises 908 residues: 26S proteasome non-ATPase regulatory subunit 2 (908 aa).

Residue M1 is modified to N-acetylmethionine. The interval 1–52 is disordered; that stretch reads MEEGGRDKAPLQPQQPPATSPGSGDEKPSGKERRDAGDKDKEQELSEEDKQL. A compositionally biased stretch (basic and acidic residues) spans 24–52; that stretch reads GDEKPSGKERRDAGDKDKEQELSEEDKQL. Residues S29 and S147 each carry the phosphoserine modification. Y194 carries the phosphotyrosine modification. S361 and S363 each carry phosphoserine. 5 PC repeats span residues 409 to 442, 443 to 479, 480 to 514, 517 to 551, and 560 to 589; these read SAAA…YIKS, GALL…TMRL, GSIF…SMEV, VTAL…TELK, and LGLG…PFRS. K551 is subject to N6-acetyllysine. Over residues 623 to 643 the composition is skewed to basic and acidic residues; it reads KEKEEDKDKKEKKDKDKKEAP. A disordered region spans residues 623–645; sequence KEKEEDKDKKEKKDKDKKEAPAD. PC repeat units follow at residues 692 to 723 and 742 to 757; these read LALA…EVSY and AAML…KDPN. The required for interaction with UBLCP1 stretch occupies residues 708–903; that stretch reads DTLSKFSHDA…LEGFVILRKN (196 aa).

Belongs to the proteasome subunit S2 family. As to quaternary structure, component of the 19S proteasome regulatory particle complex. The 26S proteasome consists of a 20S core particle (CP) and two 19S regulatory subunits (RP). The regulatory particle is made of a lid composed of 9 subunits, a base containing 6 ATPases and few additional components including PSMD2. Interacts with RPGRIP1L. Interacts with CRY1 in a KDM8-dependent manner. Interacts (via C-terminus) with phosphatase UBLCP1 (via ubiquitin-like domain); the interaction recruits UBLCP1 to the 19S regulatory particle where it dephosphorylates 19S subunit PSMC2/RPT1 which impairs PSMC2 ATPase activity and disrupts 26S proteasome assembly.

Its function is as follows. Component of the 26S proteasome, a multiprotein complex involved in the ATP-dependent degradation of ubiquitinated proteins. This complex plays a key role in the maintenance of protein homeostasis by removing misfolded or damaged proteins, which could impair cellular functions, and by removing proteins whose functions are no longer required. Therefore, the proteasome participates in numerous cellular processes, including cell cycle progression, apoptosis, or DNA damage repair. Functionally, binds to the intracellular domain of tumor necrosis factor type 1 receptor. The binding domain of TRAP1 and TRAP2 resides outside the death domain of TNFR1. In Bos taurus (Bovine), this protein is 26S proteasome non-ATPase regulatory subunit 2 (PSMD2).